The following is a 1799-amino-acid chain: Putative neural-cadherin 2 (1799 aa).

Residues Asn13, Asn64, Asn86, Asn118, Asn195, Asn260, Asn264, Asn283, and Asn377 are each glycosylated (N-linked (GlcNAc...) asparagine). Cadherin domains follow at residues 37 to 136 (DRFL…PPVF), 137 to 252 (DRQT…APQF), 253 to 364 (PQGI…PPQF), 368 to 485 (EWVT…VPKF), 486 to 590 (DREH…APTF), 590 to 709 (FAQD…QPGS), and 708 to 812 (GSKS…AGSM). N-linked (GlcNAc...) asparagine glycans are attached at residues Asn601, Asn793, Asn910, Asn948, and Asn969. Positions 973 to 1010 (QDHNCRTHLCYNGGRCVETRNGPKCVACPVGYNGPRCQ) constitute an EGF-like 1 domain. Disulfide bonds link Cys977-Cys988, Cys982-Cys997, Cys1000-Cys1009, Cys1191-Cys1217, Cys1224-Cys1239, Cys1233-Cys1248, and Cys1250-Cys1259. Residues 1011 to 1217 (QSTRSFRGNG…ALARNSFPAC (207 aa)) form the Laminin G-like 1 domain. The region spanning 1220–1260 (TDEVCLKTEHTARCWEHGNCVASLVQAKCHCQPGWMGPGCN) is the EGF-like 2 domain. A Laminin G-like 2 domain is found at 1263-1454 (TIPTTFKAQS…TMARNLERNC (192 aa)). N-linked (GlcNAc...) asparagine glycans are attached at residues Asn1376 and Asn1437. Cystine bridges form between Cys1419–Cys1454, Cys1501–Cys1512, Cys1506–Cys1523, and Cys1525–Cys1534. The EGF-like 3; calcium-binding domain occupies 1497-1535 (DRNECLDLPCLNGATCINLEPRLRYRCICPEGYWGENCE). The helical transmembrane segment at 1549 to 1569 (ALGAIFVCLIIILILALIFVL) threads the bilayer. Residues 1726–1799 (ASSQLPSDGG…PLPEVDKVVL (74 aa)) are disordered. Gly residues-rich tracts occupy residues 1733-1744 (DGGGGSGDGPGP), 1752-1763 (LGGGGTGGGSGI), and 1775-1786 (SGAGPGGGGGSS).

It is found in the cell membrane. Functionally, cadherins are calcium-dependent cell adhesion proteins. They preferentially interact with themselves in a homophilic manner in connecting cells. The polypeptide is Putative neural-cadherin 2 (CadN2) (Drosophila melanogaster (Fruit fly)).